We begin with the raw amino-acid sequence, 100 residues long: MPVRSLSASNSKNAIPLSALRRIWSGELFLKWFCNSTAVMSLGKLPTKTINLLPFLPFLPLPPRPLRVFLFFFTGSSPSFPAALLGLFPSGACSFFTSFS.

A helical transmembrane segment spans residues 68–88; that stretch reads VFLFFFTGSSPSFPAALLGLF.

Its subcellular location is the membrane. This is an uncharacterized protein from Saccharomyces cerevisiae (strain ATCC 204508 / S288c) (Baker's yeast).